The sequence spans 320 residues: Aminoacyl tRNA synthase complex-interacting multifunctional protein 2 (320 aa).

The residue at position 36 (Ser36) is a Phosphoserine. The interaction with PRKN stretch occupies residues 82 to 162; it reads TPDADLDVTN…HTHSAVRSVP (81 aa). Residues 162-225 are interaction with TP53; it reads PANLLQCFGE…FLFSLFGQKQ (64 aa). Residues 220–317 enclose the GST C-terminal domain; sequence LFGQKQDAVN…NLAPFHTALK (98 aa).

In terms of assembly, part of the multisynthetase complex (MSC), a multisubunit complex that groups tRNA ligases for Arg (RARS1), Asp (DARS1), Gln (QARS1), Ile (IARS1), Leu (LARS1), Lys (KARS1), Met (MARS1) the bifunctional ligase for Glu and Pro (EPRS1) and the auxiliary subunits AIMP1/p43, AIMP2/p38 and EEF1E1/p18. Interacts (via N-terminus) with KARS1. Interacts with EPRS1. Forms a linear complex that contains MARS1, EEF1E1, EPRS1 and AIMP2 that is at the core of the multisubunit complex. Binds FUBP1 (via C-terminus). Interacts in both its unphosphorylated and phosphorylated forms with p53/TP53 (via N-terminus) in the nucleus following UV irradiation. Interacts (via N-terminus) with PRKN/parkin (via first RING-type domain). Interacts with TARS3. Phosphorylated on serine residues in response to UV irradiation. Post-translationally, ubiquitinated by PRKN, leading to its degradation by the proteasome.

The protein localises to the cytoplasm. It localises to the cytosol. Its subcellular location is the nucleus. Functionally, required for assembly and stability of the aminoacyl-tRNA synthase complex. Mediates ubiquitination and degradation of FUBP1, a transcriptional activator of MYC, leading to MYC down-regulation which is required for aveolar type II cell differentiation. Blocks MDM2-mediated ubiquitination and degradation of p53/TP53. Functions as a proapoptotic factor. The polypeptide is Aminoacyl tRNA synthase complex-interacting multifunctional protein 2 (AIMP2) (Bos taurus (Bovine)).